Consider the following 606-residue polypeptide: Endo-beta-1,4-xylanase Xyn10C (606 aa).

Residues 1-19 (MKKIQQLLMLSLISSTLIA) form the signal peptide. Cysteine 20 carries N-palmitoyl cysteine lipidation. Cysteine 20 carries the S-diacylglycerol cysteine lipid modification. The interval 23-64 (GGGGGSTPTTSSSPQSSSPASTPSSASSSSIISSSSLSSSLS) is disordered. Low complexity predominate over residues 29-64 (TPTTSSSPQSSSPASTPSSASSSSIISSSSLSSSLS). One can recognise a CBM15 domain in the interval 91 to 242 (GNVVIEVDMA…KSVTITLAQE (152 aa)). The a carbohydrate site is built by asparagine 106 and glutamine 171. A disulfide bond links cysteine 183 and cysteine 200. Glutamine 217 contributes to the a carbohydrate binding site. The GH10 domain maps to 245-596 (SANVDHLRDL…KPALRGFADA (352 aa)). Substrate-binding positions include 296-299 (NIMK), histidine 332, and asparagine 384. The active-site Proton donor is the glutamate 385. Glutamate 497 serves as the catalytic Nucleophile. Tryptophan 552 lines the substrate pocket.

This sequence belongs to the glycosyl hydrolase 10 (cellulase F) family.

The protein resides in the cell outer membrane. It catalyses the reaction Endohydrolysis of (1-&gt;4)-beta-D-xylosidic linkages in xylans.. It functions in the pathway glycan degradation; xylan degradation. Functionally, endo-acting xylanase which specifically cleaves internal linkages on the xylan backbone, releasing xylooligosaccharides. Is able to hydrolyze oat spelt xylan, the arabinoxylans from wheat and rye, and glucuronoxylan. Also displays very low activity against xylooligosaccharides. During the xylan degradation process, Xyn10C may act on the soluble xylans and long xylooligosaccharides products released by the secreted xylanases Xyn11A, Xyn11B and Xyn10A. This chain is Endo-beta-1,4-xylanase Xyn10C (xyn10C), found in Cellvibrio japonicus (Pseudomonas fluorescens subsp. cellulosa).